We begin with the raw amino-acid sequence, 575 residues long: Urease subunit alpha (575 aa).

Residues 137–575 enclose the Urease domain; the sequence is GGIDSHIHWI…LPMAQRYFLF (439 aa). Ni(2+)-binding residues include His-142, His-144, and Lys-225. Lys-225 carries the post-translational modification N6-carboxylysine. A substrate-binding site is contributed by His-227. Ni(2+)-binding residues include His-254 and His-280. His-328 (proton donor) is an active-site residue. Asp-368 is a Ni(2+) binding site.

This sequence belongs to the metallo-dependent hydrolases superfamily. Urease alpha subunit family. As to quaternary structure, heterotrimer of UreA (gamma), UreB (beta) and UreC (alpha) subunits. Three heterotrimers associate to form the active enzyme. It depends on Ni cation as a cofactor. Post-translationally, carboxylation allows a single lysine to coordinate two nickel ions.

The protein localises to the cytoplasm. It catalyses the reaction urea + 2 H2O + H(+) = hydrogencarbonate + 2 NH4(+). The protein operates within nitrogen metabolism; urea degradation; CO(2) and NH(3) from urea (urease route): step 1/1. The chain is Urease subunit alpha from Leptothrix cholodnii (strain ATCC 51168 / LMG 8142 / SP-6) (Leptothrix discophora (strain SP-6)).